The primary structure comprises 494 residues: Protein nucleotidyltransferase YdiU (494 aa).

ATP-binding residues include glycine 99, glycine 101, arginine 102, lysine 118, aspartate 130, glycine 131, arginine 181, and arginine 188. Aspartate 261 serves as the catalytic Proton acceptor. Mg(2+) is bound by residues asparagine 262 and aspartate 271. ATP is bound at residue aspartate 271.

It belongs to the SELO family. Mg(2+) serves as cofactor. The cofactor is Mn(2+).

The catalysed reaction is L-seryl-[protein] + ATP = 3-O-(5'-adenylyl)-L-seryl-[protein] + diphosphate. It carries out the reaction L-threonyl-[protein] + ATP = 3-O-(5'-adenylyl)-L-threonyl-[protein] + diphosphate. The enzyme catalyses L-tyrosyl-[protein] + ATP = O-(5'-adenylyl)-L-tyrosyl-[protein] + diphosphate. It catalyses the reaction L-histidyl-[protein] + UTP = N(tele)-(5'-uridylyl)-L-histidyl-[protein] + diphosphate. The catalysed reaction is L-seryl-[protein] + UTP = O-(5'-uridylyl)-L-seryl-[protein] + diphosphate. It carries out the reaction L-tyrosyl-[protein] + UTP = O-(5'-uridylyl)-L-tyrosyl-[protein] + diphosphate. Functionally, nucleotidyltransferase involved in the post-translational modification of proteins. It can catalyze the addition of adenosine monophosphate (AMP) or uridine monophosphate (UMP) to a protein, resulting in modifications known as AMPylation and UMPylation. The protein is Protein nucleotidyltransferase YdiU of Variovorax paradoxus (strain S110).